The following is a 221-amino-acid chain: NEDD4 family-interacting protein 1 (221 aa).

Ala2 is modified (N-acetylalanine). The interaction with UBE2L3 stretch occupies residues 2–41 (ALALAALAAVEPACGTGYQQLQNEEEPGEREQTAGDAPPP). Over 2–116 (ALALAALAAV…ADQLRIGNDG (115 aa)) the chain is Cytoplasmic. The interval 15–45 (CGTGYQQLQNEEEPGEREQTAGDAPPPYSSI) is disordered. Short sequence motifs (PPxY motif) lie at residues 39–42 (PPPY), 64–67 (PPSY), and 74–76 (PSY). The segment at 42 to 76 (YSSISAESAAYFDYKDESGFPKPPSYNVATTLPSY) is interaction with ITCH. Residues 117-137 (IFMLTFFMAFLFNWIGFFLSF) form a helical membrane-spanning segment. Topologically, residues 138-143 (CLTTSA) are extracellular. The chain crosses the membrane as a helical span at residues 144–164 (AGRYGAISGFGLSLIKWILIV). Over 165-172 (RFSTYFPG) the chain is Cytoplasmic. Residues 173–193 (YFDGQYWLWWVFLVLGFLLFL) traverse the membrane as a helical segment. The Extracellular portion of the chain corresponds to 194 to 221 (RGFINYAKVRKMPETFSNLPRTRVLFIY).

In terms of assembly, forms heterodimers with NDFIP2. Interacts with several E3 ubiquitin-protein ligases, including ITCH, NEDD4, NEDD4L and WWP2. The interaction with NEDD4, NEDD4L and ITCH leads to relocalization of these proteins to exosomes and eventually to exosomal secretion. Interacts with SR1402. Interacts with SLC11A2/DMT1. Interacts with PTEN. May interact with phosphorylated EGFR. Interacts with BRAT1. Interacts with KCNH2. Interacts with MAVS. Part of a complex containing ITCH, NDFIP1 and MAP3K7. Interacts (via N-terminus) with UBE2L3; the interaction mediates recruitment of UBE2L3 to ITCH. In terms of processing, ubiquitinated by NEDD4; mono-, di- and polyubiquitinated forms are detected. Ubiquitination regulates its degradation. Undergoes transient tyrosine phosphorylation following EGF stimulation, most probably by catalyzed by SRC. Phosphorylation SRC is enhanced in the presence of NDFIP2 which may act as a scaffold to recruit SRC to NDFIP1.

It is found in the endosome membrane. The protein resides in the golgi apparatus membrane. Its subcellular location is the synapse. The protein localises to the synaptosome. It localises to the cell projection. It is found in the dendrite. The protein resides in the secreted. Functionally, activates HECT domain-containing E3 ubiquitin-protein ligases, including NEDD4 and ITCH, and consequently modulates the stability of their targets. As a result, controls many cellular processes. Prevents chronic T-helper cell-mediated inflammation by activating ITCH and thus controlling JUNB degradation. Promotes pancreatic beta cell death through degradation of JUNB and inhibition of the unfolded protein response, leading to reduction of insulin secretion. Restricts the production of pro-inflammatory cytokines in effector Th17 T-cells by promoting ITCH-mediated ubiquitination degradation of RORC. Together with NDFIP2, limits the cytokine signaling and expansion of effector Th2 T-cells by promoting degradation of JAK1, probably by ITCH- and NEDD4L-mediated ubiquitination. Regulates peripheral T-cell tolerance to self and foreign antigens, forcing the exit of naive CD4+ T-cells from the cell cycle before they become effector T-cells. Negatively regulates RLR-mediated antiviral response by promoting SMURF1-mediated ubiquitination and subsequent degradation of MAVS. Negatively regulates KCNH2 potassium channel activity by decreasing its cell-surface expression and interfering with channel maturation through recruitment of NEDD4L to the Golgi apparatus where it mediates KCNH2 degradation. In cortical neurons, mediates the ubiquitination of the divalent metal transporter SLC11A2/DMT1 by NEDD4L, leading to its down-regulation and protection of the cells from cobalt and iron toxicity. Important for normal development of dendrites and dendritic spines in cortex. Enhances the ubiquitination of BRAT1 mediated by: NEDD4, NEDD4L and ITCH and is required for the nuclear localization of ubiquitinated BRAT1. Enhances the ITCH-mediated ubiquitination of MAP3K7 by recruiting E2 ubiquitin-conjugating enzyme UBE2L3 to ITCH. Modulates EGFR signaling through multiple pathways. In particular, may regulate the ratio of AKT1-to-MAPK8 signaling in response to EGF, acting on AKT1 probably through PTEN destabilization and on MAPK8 through ITCH-dependent MAP2K4 inactivation. As a result, may control cell growth rate. Inhibits cell proliferation by promoting PTEN nuclear localization and changing its signaling specificity. In Rattus norvegicus (Rat), this protein is NEDD4 family-interacting protein 1 (Ndfip1).